We begin with the raw amino-acid sequence, 126 residues long: uncharacterized protein (126 aa).

Residues 83-126 (VPPPLDRSHESPEEFFPPQNRNRGGGPKAQIQRHPPEALEKTTH) form a disordered region. Residues 116 to 126 (HPPEALEKTTH) show a composition bias toward basic and acidic residues.

This is an uncharacterized protein from Galliformes (FAdV-1).